Reading from the N-terminus, the 358-residue chain is Type II restriction enzyme SacI (358 aa).

It carries out the reaction Endonucleolytic cleavage of DNA to give specific double-stranded fragments with terminal 5'-phosphates.. Functionally, a subtype P restriction enzyme that recognizes the double-stranded sequence 5'-GAGCTC-3' and cleaves after T-5. The chain is Type II restriction enzyme SacI from Streptomyces achromogenes.